Consider the following 142-residue polypeptide: Alpha-lactalbumin (142 aa).

An N-terminal signal peptide occupies residues 1 to 19 (MMSFVSLLLVGILFHATQA). A C-type lysozyme domain is found at 20–142 (EQLTKCEVFQ…KLDQWLCEKL (123 aa)). Cystine bridges form between Cys25/Cys139, Cys47/Cys130, Cys80/Cys96, and Cys92/Cys110. 2 N-linked (GlcNAc...) asparagine glycosylation sites follow: Asn64 and Asn93. Lys98, Asp101, Asp103, Asp106, and Asp107 together coordinate Ca(2+).

The protein belongs to the glycosyl hydrolase 22 family. Lactose synthase (LS) is a heterodimer of a catalytic component, beta1,4-galactosyltransferase (beta4Gal-T1) and a regulatory component, alpha-lactalbumin (LA). As to expression, mammary gland specific. Secreted in milk.

It is found in the secreted. Regulatory subunit of lactose synthase, changes the substrate specificity of galactosyltransferase in the mammary gland making glucose a good acceptor substrate for this enzyme. This enables LS to synthesize lactose, the major carbohydrate component of milk. In other tissues, galactosyltransferase transfers galactose onto the N-acetylglucosamine of the oligosaccharide chains in glycoproteins. This chain is Alpha-lactalbumin (LALBA), found in Capra hircus (Goat).